Consider the following 68-residue polypeptide: Large ribosomal subunit protein bL32 (68 aa).

It belongs to the bacterial ribosomal protein bL32 family.

This is Large ribosomal subunit protein bL32 from Orientia tsutsugamushi (strain Ikeda) (Rickettsia tsutsugamushi).